We begin with the raw amino-acid sequence, 138 residues long: Prefoldin subunit alpha (138 aa).

It belongs to the prefoldin subunit alpha family. Heterohexamer of two alpha and four beta subunits.

It localises to the cytoplasm. In terms of biological role, molecular chaperone capable of stabilizing a range of proteins. Seems to fulfill an ATP-independent, HSP70-like function in archaeal de novo protein folding. This chain is Prefoldin subunit alpha, found in Methanosphaera stadtmanae (strain ATCC 43021 / DSM 3091 / JCM 11832 / MCB-3).